The sequence spans 225 residues: RNA-binding protein 24 (225 aa).

The region spanning 11–88 (TKIFVGGLPY…RKANVNLAYL (78 aa)) is the RRM domain.

Its subcellular location is the nucleus. The protein resides in the cytoplasm. Its function is as follows. Multifunctional RNA-binding protein involved in the regulation of pre-mRNA splicing, mRNA stability and mRNA translation important for cell fate decision and differentiation. Plays a major role in pre-mRNA alternative splicing regulation. Mediates preferentially muscle-specific exon inclusion in numerous mRNAs important for striated cardiac and skeletal muscle cell differentiation. Binds to intronic splicing enhancer (ISE) composed of stretches of GU-rich motifs localized in flanking intron of exon that will be included by alternative splicing. Involved in embryonic stem cell (ESC) transition to cardiac cell differentiation by promoting pre-mRNA alternative splicing events of several pluripotency and/or differentiation genes. Plays a role in the regulation of mRNA stability and mRNA translation to which it is bound. Involved in myogenic differentiation by regulating MYOG levels. Binds to a huge amount of mRNAs. Involved in embryonic heart development and myogenic differentiation of somitic muscle progenitors. This is RNA-binding protein 24 from Gallus gallus (Chicken).